The sequence spans 97 residues: Sugar transporter SemiSWEET (97 aa).

A PQ-loop domain is found at 4–70 (IERIGKALEP…IYGIYHKNPT (67 aa)). A run of 3 helical transmembrane segments spans residues 15 to 35 (MLVM…KLYV), 44 to 65 (LSLT…YGIY), and 71 to 91 (IWVG…GIIA).

As to quaternary structure, homodimer.

It is found in the cell membrane. Its function is as follows. The homodimer mediates transmembrane sugar transport down a concentration gradient. Transport is probably effected by rocking-type movements, where a cargo-binding cavity opens first on one and then on the other side of the membrane. This is Sugar transporter SemiSWEET from Vibrio sp. (strain N418).